A 624-amino-acid chain; its full sequence is Heat shock factor protein 5 (624 aa).

The DNA-binding element occupies 11 to 228 (NPNNFPAKLW…FHRSFRRDNL (218 aa)). 5 disordered regions span residues 52-77 (LSPP…SGVG), 112-138 (GAAG…HSPH), 186-214 (SASA…HGPV), 429-461 (CPSS…LEPL), and 572-605 (GPAN…DLHL). Composition is skewed to gly residues over residues 58 to 77 (GAGG…SGVG) and 112 to 127 (GAAG…GPAG). Composition is skewed to low complexity over residues 186–197 (SASASTSPLQHQ) and 442–457 (PNAN…QASQ). Ser600 bears the Phosphoserine mark.

It belongs to the HSF family. In terms of assembly, homooligomer. As to expression, highly expressed in testis particularly in spermatocytes (at protein level). Not expressed in fetal testis and ovary.

It localises to the nucleus. Its subcellular location is the chromosome. Functionally, DNA-binding transcription factor that is essential for male fertility, spermatogenesis and meiotic prophase progression in spermatocytes under non-stress conditions. Positvely and negatively regulates gene expression to ensure progression of meiotic prophase beyond pachytene stage in spermatocytes. Plays a role in male germline meiotic sex chromosome remodeling and silencing through regulation of SMARCA4. This chain is Heat shock factor protein 5 (Hsf5), found in Mus musculus (Mouse).